A 464-amino-acid polypeptide reads, in one-letter code: Methionine aminopeptidase 2-2 (464 aa).

Residues 1-106 (MGAKTYEGGD…PRVPLSQLFP (106 aa)) form a disordered region. The span at 37 to 53 (EDGDGEFGSDDDDDGGD) shows a compositional bias: acidic residues. Residues 70–86 (PKKKKRSKKKKNNKKKS) show a composition bias toward basic residues. His-216 contributes to the substrate binding site. A divalent metal cation-binding residues include Asp-237, Asp-248, and His-317. His-325 is a binding site for substrate. Residues Glu-350 and Glu-445 each contribute to the a divalent metal cation site.

This sequence belongs to the peptidase M24A family. Methionine aminopeptidase eukaryotic type 2 subfamily. Co(2+) serves as cofactor. Zn(2+) is required as a cofactor. It depends on Mn(2+) as a cofactor. The cofactor is Fe(2+).

The protein resides in the cytoplasm. The catalysed reaction is Release of N-terminal amino acids, preferentially methionine, from peptides and arylamides.. Its function is as follows. Cotranslationally removes the N-terminal methionine from nascent proteins. The N-terminal methionine is often cleaved when the second residue in the primary sequence is small and uncharged (Met-Ala-, Cys, Gly, Pro, Ser, Thr, or Val). This Talaromyces stipitatus (strain ATCC 10500 / CBS 375.48 / QM 6759 / NRRL 1006) (Penicillium stipitatum) protein is Methionine aminopeptidase 2-2.